Here is a 102-residue protein sequence, read N- to C-terminus: NADH-quinone oxidoreductase subunit K (102 aa).

3 consecutive transmembrane segments (helical) span residues 5–25, 30–50, and 62–82; these read LAHY…GIFV, IIVI…NLVA, and IFAM…LAIL.

This sequence belongs to the complex I subunit 4L family. NDH-1 is composed of 14 different subunits. Subunits NuoA, H, J, K, L, M, N constitute the membrane sector of the complex.

It localises to the cell inner membrane. The catalysed reaction is a quinone + NADH + 5 H(+)(in) = a quinol + NAD(+) + 4 H(+)(out). In terms of biological role, NDH-1 shuttles electrons from NADH, via FMN and iron-sulfur (Fe-S) centers, to quinones in the respiratory chain. The immediate electron acceptor for the enzyme in this species is believed to be ubiquinone. Couples the redox reaction to proton translocation (for every two electrons transferred, four hydrogen ions are translocated across the cytoplasmic membrane), and thus conserves the redox energy in a proton gradient. This is NADH-quinone oxidoreductase subunit K from Phenylobacterium zucineum (strain HLK1).